Reading from the N-terminus, the 124-residue chain is MKVSLVYGLTCFLDATSSALPSAMAAANSESSALEKRNDGYLVMCKNCDPNSGSCDWKQNWNTCVGIGSNVHWMVTGESNGQQGCAIIWEGSGCTGRSTTMCCPGDTCCNINTGFYIRSYRRVE.

A signal peptide spans 1–19; the sequence is MKVSLVYGLTCFLDATSSA. Positions 20-37 are excised as a propeptide; that stretch reads LPSAMAAANSESSALEKR. Cystine bridges form between cysteine 45–cysteine 55, cysteine 48–cysteine 108, cysteine 64–cysteine 94, cysteine 85–cysteine 102, and cysteine 103–cysteine 109.

Monomer.

The protein localises to the secreted. This toxin kills sensitive strains of yeast. The polypeptide is Killer toxin (HSK) (Cyberlindnera saturnus (Yeast)).